The sequence spans 1316 residues: DNA-directed RNA polymerase subunit beta' (1316 aa).

Positions 60, 62, 75, and 78 each coordinate Zn(2+). The Mg(2+) site is built by aspartate 535, aspartate 537, and aspartate 539. 4 residues coordinate Zn(2+): cysteine 891, cysteine 968, cysteine 975, and cysteine 978.

It belongs to the RNA polymerase beta' chain family. As to quaternary structure, the RNAP catalytic core consists of 2 alpha, 1 beta, 1 beta' and 1 omega subunit. When a sigma factor is associated with the core the holoenzyme is formed, which can initiate transcription. Mg(2+) is required as a cofactor. Zn(2+) serves as cofactor.

It carries out the reaction RNA(n) + a ribonucleoside 5'-triphosphate = RNA(n+1) + diphosphate. DNA-dependent RNA polymerase catalyzes the transcription of DNA into RNA using the four ribonucleoside triphosphates as substrates. The chain is DNA-directed RNA polymerase subunit beta' from Mycobacterium ulcerans (strain Agy99).